The chain runs to 250 residues: 2,3-bisphosphoglycerate-dependent phosphoglycerate mutase (250 aa).

Residues 10 to 17 (RHGESQWN), 23 to 24 (TG), arginine 62, 89 to 92 (ERHY), lysine 100, 116 to 117 (RR), and 185 to 186 (GN) each bind substrate. Histidine 11 (tele-phosphohistidine intermediate) is an active-site residue. Glutamate 89 acts as the Proton donor/acceptor in catalysis.

This sequence belongs to the phosphoglycerate mutase family. BPG-dependent PGAM subfamily. Homodimer.

The enzyme catalyses (2R)-2-phosphoglycerate = (2R)-3-phosphoglycerate. It functions in the pathway carbohydrate degradation; glycolysis; pyruvate from D-glyceraldehyde 3-phosphate: step 3/5. In terms of biological role, catalyzes the interconversion of 2-phosphoglycerate and 3-phosphoglycerate. The chain is 2,3-bisphosphoglycerate-dependent phosphoglycerate mutase from Serratia proteamaculans (strain 568).